The following is a 1087-amino-acid chain: Gelsolin-related protein of 125 kDa (1087 aa).

Residues 1 to 40 (MEEDNIVDSKEIENNVEDKKEETPSSSPSPSSSLQQQQEE) are disordered. The span at 7–23 (VDSKEIENNVEDKKEET) shows a compositional bias: basic and acidic residues. Residues 24-40 (PSSSPSPSSSLQQQQEE) are compositionally biased toward low complexity. Gelsolin-like repeat units lie at residues 73-146 (PFHF…PTFL), 183-286 (FLFK…FSKW), 335-442 (GKLL…FGTE), and 465-538 (TQLF…DNFW). The stretch at 550-598 (INTFINENKEEKEKEEEEKEEEEEEEEEEEEEEEEEKDNNKTTTIIKHL) forms a coiled coil. The interval 555-592 (NENKEEKEKEEEEKEEEEEEEEEEEEEEEEEKDNNKTT) is disordered. Acidic residues predominate over residues 562-586 (EKEEEEKEEEEEEEEEEEEEEEEEK). One copy of the Gelsolin-like 5 repeat lies at 614–692 (IFKADQINPF…EQYNESPLFK (79 aa)). Positions 710-912 (IISYKQKLAE…ETVNEENEVG (203 aa)) form a coiled coil. Basic and acidic residues-rich tracts occupy residues 732 to 770 (KQQQ…KEEE), 779 to 808 (EEVK…KEVN), 817 to 840 (EEVK…KEEE), and 849 to 900 (EEVK…KVNE). Residues 732 to 1087 (KQQQEQEQEQ…HNRSSSLTHA (356 aa)) are disordered. The span at 901–910 (ENETVNEENE) shows a compositional bias: acidic residues. Composition is skewed to polar residues over residues 925-939 (ANSS…NEGS) and 950-961 (EPITPSVVSSSG). Residues 983 to 1002 (QGRKGGRKSHGKNQPQHKKN) show a composition bias toward basic residues. Residues 1018–1040 (KSLNLDIDNQSFDLNSINNNNSV) show a composition bias toward polar residues. Positions 1047-1065 (SSPLSFSSSSINSNSTHNT) are enriched in low complexity. Basic residues predominate over residues 1066 to 1080 (PSKKNKNKNKKKHNR).

This sequence belongs to the villin/gelsolin family. In terms of assembly, interacts with rasD and abpC.

Its subcellular location is the cytoplasmic vesicle. Its function is as follows. Involved in phototaxis. Required for coupling photodetection to the locomotory machinery of slugs. May be essential in the natural environment for the propagation of spores. This chain is Gelsolin-related protein of 125 kDa (gnrA), found in Dictyostelium discoideum (Social amoeba).